A 523-amino-acid polypeptide reads, in one-letter code: Signal peptide peptidase-like 3 (523 aa).

The N-terminal stretch at 1–35 (MAFPAPSSSSPRRRGRGLAYLLVSVLLLASRVPGA) is a signal peptide. The Lumenal portion of the chain corresponds to 36 to 207 (AGADSEFEDG…EKPSFDGAIP (172 aa)). A PA domain is found at 110–182 (SAPLASSIAV…SQSAGRKILS (73 aa)). N-linked (GlcNAc...) asparagine glycosylation occurs at N159. The chain crosses the membrane as a helical span at residues 208 to 228 (FLWLMAVGSVACASVWSFVVV). The Cytoplasmic portion of the chain corresponds to 229–254 (GDEDKNAPTLGGEEAADSEIVELQTK). The helical transmembrane segment at 255-272 (TALVFIVTASLVLLFLFF) threads the bilayer. The Lumenal portion of the chain corresponds to 273-275 (FKS). The helical transmembrane segment at 276-298 (TWSAWLLVVLFCLSGLQGLHYVA) threads the bilayer. Over 299 to 321 (STLIVRTCDRCREAKVALPVLGN) the chain is Cytoplasmic. Residues 322–342 (VTVVTLVILPLALIFVVVWAV) form a helical membrane-spanning segment. The Lumenal segment spans residues 343 to 347 (HQNSP). A helical membrane pass occupies residues 348–368 (FAWVGQDLMGICMMILVLQVV). Over 369–377 (HLPNIKVAT) the chain is Cytoplasmic. The helical transmembrane segment at 378 to 398 (ALLVSAFMYDIFWVFISPFIF) threads the bilayer. The active site involves D387. Residues 399–430 (KKSVMITVARGSDEGPSLPMVLKMPKEFDTWN) lie on the Lumenal side of the membrane. Residues 431–451 (GYDMIGFGDILFPGLLVAFSF) form a helical membrane-spanning segment. Residue D439 is part of the active site. At 452 to 465 (RYDRANGKDLTDGY) the chain is on the cytoplasmic side. A helical membrane pass occupies residues 466–486 (FLCLMIGYAFGLSCTYVGLYL). The Lumenal portion of the chain corresponds to 487–489 (MKS). A helical membrane pass occupies residues 490–510 (GQPALLYLVPSTLGTIVTLGA). A PAL motif is present at residues 492–494 (PAL). The Cytoplasmic portion of the chain corresponds to 511 to 523 (KRGELSQLWNAKV).

Belongs to the peptidase A22B family. In terms of processing, glycosylated.

It is found in the endosome membrane. In terms of biological role, intramembrane-cleaving aspartic protease (I-CLiP) that cleaves type II membrane signal peptides in the hydrophobic plane of the membrane. This is Signal peptide peptidase-like 3 (SPPL3) from Oryza sativa subsp. japonica (Rice).